Reading from the N-terminus, the 1712-residue chain is Probable ATP-dependent RNA helicase DDX60 (1712 aa).

The region spanning 772–939 (LDVVDKNESA…WLQSVKWYWK (168 aa)) is the Helicase ATP-binding domain. 785–792 (APTSSGKT) is an ATP binding site. The DEVH box signature appears at 889–892 (DEVH). A Helicase C-terminal domain is found at 1226-1370 (YADQKAVDTE…HFPLSITLVL (145 aa)).

This sequence belongs to the helicase family. Interacts with EXOSC1, EXOSC4, RIGI, IFIH1/MDA5 and DHX58/LGP2. As to expression, brain, lymph node, prostate, stomach, thyroid, tongue, trachea, uterus, skeletal muscle, spleen, kidney, liver and small intestine.

It localises to the cytoplasm. The catalysed reaction is ATP + H2O = ADP + phosphate + H(+). In terms of biological role, positively regulates RIGI- and IFIH1/MDA5-dependent type I interferon and interferon inducible gene expression in response to viral infection. Binds ssRNA, dsRNA and dsDNA and can promote the binding of RIGI to dsRNA. Exhibits antiviral activity against hepatitis C virus and vesicular stomatitis virus (VSV). In Homo sapiens (Human), this protein is Probable ATP-dependent RNA helicase DDX60 (DDX60).